The chain runs to 188 residues: NAD(P)H-quinone oxidoreductase subunit J (188 aa).

This sequence belongs to the complex I 30 kDa subunit family. As to quaternary structure, NDH-1 can be composed of about 15 different subunits; different subcomplexes with different compositions have been identified which probably have different functions.

The protein resides in the cellular thylakoid membrane. It carries out the reaction a plastoquinone + NADH + (n+1) H(+)(in) = a plastoquinol + NAD(+) + n H(+)(out). The catalysed reaction is a plastoquinone + NADPH + (n+1) H(+)(in) = a plastoquinol + NADP(+) + n H(+)(out). Its function is as follows. NDH-1 shuttles electrons from an unknown electron donor, via FMN and iron-sulfur (Fe-S) centers, to quinones in the respiratory and/or the photosynthetic chain. The immediate electron acceptor for the enzyme in this species is believed to be plastoquinone. Couples the redox reaction to proton translocation, and thus conserves the redox energy in a proton gradient. Cyanobacterial NDH-1 also plays a role in inorganic carbon-concentration. In Parasynechococcus marenigrum (strain WH8102), this protein is NAD(P)H-quinone oxidoreductase subunit J.